The chain runs to 322 residues: HPr kinase/phosphorylase (322 aa).

Catalysis depends on residues His146 and Lys167. Residue 161 to 168 coordinates ATP; it reads GDSGLGKS. Ser168 is a Mg(2+) binding site. The active-site Proton acceptor; for phosphorylation activity. Proton donor; for dephosphorylation activity is Asp185. The interval 209 to 218 is important for the catalytic mechanism of both phosphorylation and dephosphorylation; sequence LEVRGLGLLD. Glu210 lines the Mg(2+) pocket. Arg250 is a catalytic residue. The segment at 271–276 is important for the catalytic mechanism of dephosphorylation; that stretch reads QVAAGR.

The protein belongs to the HPrK/P family. Homohexamer. It depends on Mg(2+) as a cofactor.

The enzyme catalyses [HPr protein]-L-serine + ATP = [HPr protein]-O-phospho-L-serine + ADP + H(+). The catalysed reaction is [HPr protein]-O-phospho-L-serine + phosphate + H(+) = [HPr protein]-L-serine + diphosphate. In terms of biological role, catalyzes the ATP- as well as the pyrophosphate-dependent phosphorylation of a specific serine residue in HPr, a phosphocarrier protein of the phosphoenolpyruvate-dependent sugar phosphotransferase system (PTS). HprK/P also catalyzes the pyrophosphate-producing, inorganic phosphate-dependent dephosphorylation (phosphorolysis) of seryl-phosphorylated HPr (P-Ser-HPr). The chain is HPr kinase/phosphorylase from Burkholderia mallei (strain NCTC 10247).